The following is a 153-amino-acid chain: NAD(P)H-quinone oxidoreductase subunit N (153 aa).

The protein belongs to the complex I NdhN subunit family. NDH-1 can be composed of about 15 different subunits; different subcomplexes with different compositions have been identified which probably have different functions.

The protein localises to the cellular thylakoid membrane. It catalyses the reaction a plastoquinone + NADH + (n+1) H(+)(in) = a plastoquinol + NAD(+) + n H(+)(out). It carries out the reaction a plastoquinone + NADPH + (n+1) H(+)(in) = a plastoquinol + NADP(+) + n H(+)(out). NDH-1 shuttles electrons from an unknown electron donor, via FMN and iron-sulfur (Fe-S) centers, to quinones in the respiratory and/or the photosynthetic chain. The immediate electron acceptor for the enzyme in this species is believed to be plastoquinone. Couples the redox reaction to proton translocation, and thus conserves the redox energy in a proton gradient. Cyanobacterial NDH-1 also plays a role in inorganic carbon-concentration. This Prochlorococcus marinus (strain MIT 9303) protein is NAD(P)H-quinone oxidoreductase subunit N.